We begin with the raw amino-acid sequence, 600 residues long: CTP synthase (600 aa).

In terms of domain architecture, Glutamine amidotransferase type-1 spans 304–570 (TIVLVGKYTH…IQSGEEVEWS (267 aa)). Active-site for GATase activity residues include Cys403, His532, and Glu534.

This sequence belongs to the CTP synthase family.

The catalysed reaction is UTP + L-glutamine + ATP + H2O = CTP + L-glutamate + ADP + phosphate + 2 H(+). It participates in pyrimidine metabolism; CTP biosynthesis via de novo pathway; CTP from UDP: step 2/2. Catalyzes the ATP-dependent amination of UTP to CTP with either L-glutamine or ammonia as the source of nitrogen. This is CTP synthase (ura7) from Schizosaccharomyces pombe (strain 972 / ATCC 24843) (Fission yeast).